We begin with the raw amino-acid sequence, 90 residues long: Acyl-CoA-binding protein homolog (90 aa).

The ACB domain maps to 3–89; sequence LQEQFDQAAS…VESLIASLGL (87 aa). An acyl-CoA-binding positions include arginine 15, 30–34, lysine 53, lysine 57, and tyrosine 76; that span reads YALFK.

The protein belongs to the ACBP family.

Binds medium- and long-chain acyl-CoA esters with very high affinity and may function as an intracellular carrier of acyl-CoA esters. This is Acyl-CoA-binding protein homolog from Manduca sexta (Tobacco hawkmoth).